We begin with the raw amino-acid sequence, 339 residues long: NADH-quinone oxidoreductase subunit H (339 aa).

Helical transmembrane passes span 9 to 29 (IFPL…LILC), 50 to 70 (PNVV…KLLF), 82 to 102 (ILFI…WAVI), 115 to 135 (VGVL…IIAG), 161 to 181 (MGLV…SEII), 187 to 207 (IPWW…ISVL), 235 to 255 (MGFA…SAMT), 275 to 295 (IPGF…FLWI), and 311 to 331 (GWKV…SVLV).

Belongs to the complex I subunit 1 family. As to quaternary structure, NDH-1 is composed of 14 different subunits. Subunits NuoA, H, J, K, L, M, N constitute the membrane sector of the complex.

The protein localises to the cell inner membrane. The enzyme catalyses a quinone + NADH + 5 H(+)(in) = a quinol + NAD(+) + 4 H(+)(out). NDH-1 shuttles electrons from NADH, via FMN and iron-sulfur (Fe-S) centers, to quinones in the respiratory chain. The immediate electron acceptor for the enzyme in this species is believed to be ubiquinone. Couples the redox reaction to proton translocation (for every two electrons transferred, four hydrogen ions are translocated across the cytoplasmic membrane), and thus conserves the redox energy in a proton gradient. This subunit may bind ubiquinone. In Rickettsia rickettsii (strain Iowa), this protein is NADH-quinone oxidoreductase subunit H.